A 579-amino-acid polypeptide reads, in one-letter code: Zinc finger protein 384 (579 aa).

A disordered region spans residues 171–198; it reads TLTEEGGGGGGGGGTVAPPKPPRGRKKK. Over residues 175–185 the composition is skewed to gly residues; it reads EGGGGGGGGGT. C2H2-type zinc fingers lie at residues 229–251, 257–279, 285–307, 318–340, 346–368, 374–398, 404–426, and 434–456; these read YRCRMCSLTFYSKSEMQIHSKSH, HKCPHCSKTFANSSYLAQHIRIH, YSCNFCEKSFRQLSHLQQHTRIH, HKCPHCSKTFANTSYLAQHLRIH, YNCSYCQKAFRQLSHLQQHTRIH, YKCAHPGCEKAFTQLSNLQSHRRQH, FKCHNCHRAYTDAASLEAHLSTH, and YTCTICSRAYTSETYLMKHMRKH. Over residues 500–513 the composition is skewed to low complexity; sequence QAQASQASQQQQQQ. A disordered region spans residues 500 to 553; that stretch reads QAQASQASQQQQQQQPPPPQPPHFQSPGAAPQGGGGGDSNQNPPPQCSFDLTPY. Pro residues predominate over residues 514–523; that stretch reads QPPPPQPPHF.

Belongs to the krueppel C2H2-type zinc-finger protein family. As to quaternary structure, interacts with BCAR1. As to expression, expressed in osteocytes, osteoblasts, and chondrocytes in bone.

It is found in the nucleus. Functionally, transcription factor that binds the consensus DNA sequence [GC]AAAAA. Seems to bind and regulate the promoters of MMP1, MMP3, MMP7 and COL1A1. The polypeptide is Zinc finger protein 384 (Znf384) (Rattus norvegicus (Rat)).